The following is a 165-amino-acid chain: Small ribosomal subunit protein uS5 (165 aa).

Residues 10–73 form the S5 DRBM domain; that stretch reads QIEKLISLNR…TSARKNLRFV (64 aa).

The protein belongs to the universal ribosomal protein uS5 family. Part of the 30S ribosomal subunit. Contacts proteins S4 and S8.

Its function is as follows. With S4 and S12 plays an important role in translational accuracy. Located at the back of the 30S subunit body where it stabilizes the conformation of the head with respect to the body. In Borreliella burgdorferi (strain ATCC 35210 / DSM 4680 / CIP 102532 / B31) (Borrelia burgdorferi), this protein is Small ribosomal subunit protein uS5.